Reading from the N-terminus, the 929-residue chain is MTDYSKTVNLLESPFPMRGNLAKREPAWLKSWYEQKRYQKLREIAKGRPKFILHDGPPYANGDIHIGHAVNKILKDIIIRSKTQAGFDAPYVPGWDCHGLPIEVMVEKLHGKDMPKARFRELCREYAAEQVACQKKDFIRLGVLGDWDKPYLTMDFKTEADTVRMLGEIYKSGYLYRGAKPVQFCLDCGSSLAEAEVEYKDKVSPAIDVGYPFKDTAALAAAFGLAGIEGKAFAVIWTTTPWTLPASQAVSAGADVVYQLIDTPKGKLVLAKDLAEDALKRYGFSDGIAILAETTGDKLENLHMNHPFLERDIPMLNGDHVTTDAGTGLVHTAPAHGLEDYAVCNKYGIELYNPVNAEGKYISETPRVAGMSVWEANPVILQWLEETGNLLASSKIEHSYAHCWRHKTPLIYRATGQWFVGMDKAGADGKTLRDKAIKAVDDTEFFPSWGRARLEAMIEGRPDWVVSRQRYWGTPMTFFVHKETGELHPNSAELLEKVAQRIEEKGIEAWFSLDKGELLSAEDCEHYDKLSDTMDVWFDSGSTHYSVVKQREELDWPADLYLEGSDQHRGWFQSSMLTGCASSMGRAPYKQLLTHGFVVDQNGRKMSKSIGNVVAPQEVYNEFGADILRLWAASTDYSGELAISKEILKRVTESYRRIRNTLSFLFANLSDFNPIEDAVQQADMVEIDRYAVVLARQLQERLAGDYYPRYTFHFAVKDIVSFCSEDLGAFYLDILKDRLYTTKADSRARRSAQTALYHITRSLVLLIAPILCFTGEEAWDIIGGGEEDSVLFHTWHEFPTINEKAEAELVKKWTAIREAREAVTAAIEPLRADKTVGSSLQAEAEITAPEEMAGYLNALGEELRFALLVSKAEVKVGSELAVAAKASDGEKCERCWHYTRDVGAVAGYETVCKRCAENVGREGETRHYA.

Positions 58-68 (PYANGDIHIGH) match the 'HIGH' region motif. Glutamate 563 serves as a coordination point for L-isoleucyl-5'-AMP. A 'KMSKS' region motif is present at residues 605–609 (KMSKS). Lysine 608 contacts ATP. 4 residues coordinate Zn(2+): cysteine 892, cysteine 895, cysteine 912, and cysteine 915.

It belongs to the class-I aminoacyl-tRNA synthetase family. IleS type 1 subfamily. Monomer. Zn(2+) serves as cofactor.

It localises to the cytoplasm. The catalysed reaction is tRNA(Ile) + L-isoleucine + ATP = L-isoleucyl-tRNA(Ile) + AMP + diphosphate. In terms of biological role, catalyzes the attachment of isoleucine to tRNA(Ile). As IleRS can inadvertently accommodate and process structurally similar amino acids such as valine, to avoid such errors it has two additional distinct tRNA(Ile)-dependent editing activities. One activity is designated as 'pretransfer' editing and involves the hydrolysis of activated Val-AMP. The other activity is designated 'posttransfer' editing and involves deacylation of mischarged Val-tRNA(Ile). This chain is Isoleucine--tRNA ligase, found in Neisseria meningitidis serogroup C / serotype 2a (strain ATCC 700532 / DSM 15464 / FAM18).